Reading from the N-terminus, the 186-residue chain is Peptidyl-tRNA hydrolase (186 aa).

Residue Tyr16 participates in tRNA binding. The Proton acceptor role is filled by His21. 3 residues coordinate tRNA: Tyr66, Asn68, and Asn114.

This sequence belongs to the PTH family. Monomer.

The protein resides in the cytoplasm. The catalysed reaction is an N-acyl-L-alpha-aminoacyl-tRNA + H2O = an N-acyl-L-amino acid + a tRNA + H(+). Functionally, hydrolyzes ribosome-free peptidyl-tRNAs (with 1 or more amino acids incorporated), which drop off the ribosome during protein synthesis, or as a result of ribosome stalling. In terms of biological role, catalyzes the release of premature peptidyl moieties from peptidyl-tRNA molecules trapped in stalled 50S ribosomal subunits, and thus maintains levels of free tRNAs and 50S ribosomes. The polypeptide is Peptidyl-tRNA hydrolase (Ureaplasma urealyticum serovar 10 (strain ATCC 33699 / Western)).